The following is a 297-amino-acid chain: SWIRM domain-containing protein laf1 (297 aa).

Disordered stretches follow at residues 50–70 (PKCSTIPESPKDSIVEPKPTA) and 109–173 (STPA…EFSS). Polar residues predominate over residues 159-173 (QHNTRFKQSSREFSS). One can recognise an SWIRM domain in the interval 207 to 297 (LRSEWKGPPL…AFHDEGFFDD (91 aa)).

As to quaternary structure, component of the RPD3C(L) complex.

It localises to the nucleus. Its function is as follows. Component of the RPD3C(L) histone deacetylase complex (HDAC) responsible for the deacetylation of lysine residues on the N-terminal part of the core histones (H2A, H2B, H3 and H4). Histone deacetylation gives a tag for epigenetic repression and plays an important role in transcriptional regulation, cell cycle progression and developmental events. This Schizosaccharomyces pombe (strain 972 / ATCC 24843) (Fission yeast) protein is SWIRM domain-containing protein laf1 (laf1).